We begin with the raw amino-acid sequence, 284 residues long: F-box only protein 6 (284 aa).

In terms of domain architecture, F-box spans 1–48 (MVNINELPENILLELFTHVPAPQLLRNCRLVCSLWRDLIDVMTLWKRK). In terms of domain architecture, FBA spans 69 to 250 (FYILCSLQRN…VTNSSIIVSH (182 aa)). Phosphoserine is present on residues serine 249, serine 268, serine 275, serine 278, and serine 283.

In terms of assembly, part of a SCF (SKP1-cullin-F-box) protein ligase complex. Interacts with VCP, CHEK1 and CUL1.

It localises to the cytoplasm. The protein operates within protein modification; protein ubiquitination. Substrate-recognition component of some SCF (SKP1-CUL1-F-box protein)-type E3 ubiquitin ligase complexes. Involved in endoplasmic reticulum-associated degradation pathway (ERAD) for misfolded lumenal proteins by recognizing and binding sugar chains on unfolded glycoproteins that are retrotranslocated into the cytosol and promoting their ubiquitination and subsequent degradation. Able to recognize and bind denatured glycoproteins, which are modified with not only high-mannose but also complex-type oligosaccharides. Also recognizes sulfated glycans. Also involved in DNA damage response by specifically recognizing activated CHEK1 (phosphorylated on 'Ser-345'), promoting its ubiquitination and degradation. Ubiquitination of CHEK1 is required to ensure that activated CHEK1 does not accumulate as cells progress through S phase, or when replication forks encounter transient impediments during normal DNA replication. This is F-box only protein 6 (Fbxo6) from Rattus norvegicus (Rat).